Here is a 289-residue protein sequence, read N- to C-terminus: MEGKEEDVRLGANKFSERQPIGTAAQGAADDKDYKEPPPAPLFEPGELKSWSFYRAGIAEFVATFLFLYITILTVMGVSKSTSKCATVGIQGIAWSFGGMIFALVYCTAGISGGHINPAVTFGLFLARKLSLTRALFYIIMQCLGAVCGAGVVKGFQQGLYMGNGGGANVVAPGYTKGDGLGAEIVGTFILVYTVFSATDAKRNARDSHVPILAPLPIGFAVFLVHLATIPITGTGINPARSLGAAIIYNRDHAWNDHWIFWVGPFIGAALAAIYHQVIIRAIPFKSRS.

Residues 1–36 (MEGKEEDVRLGANKFSERQPIGTAAQGAADDKDYKE) are disordered. Helical transmembrane passes span 58 to 78 (IAEF…VMGV) and 93 to 115 (IAWS…SGGH). The NPA 1 signature appears at 117–119 (NPA). The next 3 helical transmembrane spans lie at 136–156 (LFYI…VKGF), 178–198 (GDGL…VFSA), and 212–232 (ILAP…TIPI). An NPA 2 motif is present at residues 238-240 (NPA). Residues 260–280 (IFWVGPFIGAALAAIYHQVII) form a helical membrane-spanning segment.

The protein belongs to the MIP/aquaporin (TC 1.A.8) family. PIP (TC 1.A.8.11) subfamily. As to quaternary structure, interacts with PIP2-1 to form heteromers. As to expression, highly expressed in developing tassels and at lower levels in roots, shoots, ears and embryos. Expressed in the root growing zone at 5-6 mm from the root tip. Expressed in xylem parenchyma.

Its subcellular location is the cell membrane. Functionally, water channel required to facilitate the transport of water across cell membrane. Active as heteromers with PIP1-1, PIP2-1, PIP2-4 or PIP2-5, but not as homomers. The chain is Aquaporin PIP1-2 (PIP1-2) from Zea mays (Maize).